Reading from the N-terminus, the 268-residue chain is Tryptophan synthase alpha chain (268 aa).

Catalysis depends on proton acceptor residues E49 and D60.

The protein belongs to the TrpA family. In terms of assembly, tetramer of two alpha and two beta chains.

The enzyme catalyses (1S,2R)-1-C-(indol-3-yl)glycerol 3-phosphate + L-serine = D-glyceraldehyde 3-phosphate + L-tryptophan + H2O. It participates in amino-acid biosynthesis; L-tryptophan biosynthesis; L-tryptophan from chorismate: step 5/5. Functionally, the alpha subunit is responsible for the aldol cleavage of indoleglycerol phosphate to indole and glyceraldehyde 3-phosphate. The sequence is that of Tryptophan synthase alpha chain from Yersinia pestis bv. Antiqua (strain Antiqua).